Here is a 156-residue protein sequence, read N- to C-terminus: MEIWVNNDQEIVEFTEEHEELIRRVAERALELAGAGLGSNVSVSVTLVDDETITDLNRDHRGLASPTDVLSFSQLEGEDMGDLPEGEPMPLGDIVISLERCVSQAAEYGHSFERELGFLTAHGMLHLMGWDHQTPEDEARMMAKTEEILAGLGLSR.

Zn(2+) contacts are provided by His122, His126, and His132.

This sequence belongs to the endoribonuclease YbeY family. Zn(2+) serves as cofactor.

It localises to the cytoplasm. Functionally, single strand-specific metallo-endoribonuclease involved in late-stage 70S ribosome quality control and in maturation of the 3' terminus of the 16S rRNA. The sequence is that of Endoribonuclease YbeY from Symbiobacterium thermophilum (strain DSM 24528 / JCM 14929 / IAM 14863 / T).